The following is a 414-amino-acid chain: Na(+)-translocating NADH-quinone reductase subunit B (414 aa).

The next 3 membrane-spanning stretches (helical) occupy residues 56–76 (IMIM…YNAG), 129–149 (FLPI…LFCM), and 164–184 (ILFA…LGIT). At Thr236 the chain carries FMN phosphoryl threonine. The next 5 membrane-spanning stretches (helical) occupy residues 268–288 (IPGS…AMIV), 297–317 (IIAG…VIGS), 325–345 (MPWH…FMAT), 358–378 (WWYG…NPAY), and 381–401 (GMML…HVVI).

The protein belongs to the NqrB/RnfD family. As to quaternary structure, composed of six subunits; NqrA, NqrB, NqrC, NqrD, NqrE and NqrF. FMN serves as cofactor.

The protein resides in the cell inner membrane. It catalyses the reaction a ubiquinone + n Na(+)(in) + NADH + H(+) = a ubiquinol + n Na(+)(out) + NAD(+). With respect to regulation, this reaction is tightly coupled to the Na(+) pumping activity and specifically requires Na(+) for activity. Inhibited by korormicin and 2-N-heptyl-4-hydroxyquinoline N-oxide (HQNO). NQR complex catalyzes the reduction of ubiquinone-1 to ubiquinol by two successive reactions, coupled with the transport of Na(+) ions from the cytoplasm to the periplasm. NqrA to NqrE are probably involved in the second step, the conversion of ubisemiquinone to ubiquinol. In Vibrio alginolyticus, this protein is Na(+)-translocating NADH-quinone reductase subunit B.